Reading from the N-terminus, the 354-residue chain is Holliday junction branch migration complex subunit RuvB (354 aa).

Residues 4–190 (TDKLAAERII…FGIVARLEFY (187 aa)) are large ATPase domain (RuvB-L). ATP contacts are provided by residues leucine 29, arginine 30, glycine 71, lysine 74, threonine 75, threonine 76, 137-139 (EDY), arginine 180, tyrosine 190, and arginine 227. A Mg(2+)-binding site is contributed by threonine 75. Residues 191-261 (NAEELARIVT…VADAALKMLD (71 aa)) are small ATPAse domain (RuvB-S). The segment at 264-354 (AVGFDLMDRK…LPGLWDSAAT (91 aa)) is head domain (RuvB-H). Arginine 300, arginine 319, and arginine 324 together coordinate DNA.

It belongs to the RuvB family. In terms of assembly, homohexamer. Forms an RuvA(8)-RuvB(12)-Holliday junction (HJ) complex. HJ DNA is sandwiched between 2 RuvA tetramers; dsDNA enters through RuvA and exits via RuvB. An RuvB hexamer assembles on each DNA strand where it exits the tetramer. Each RuvB hexamer is contacted by two RuvA subunits (via domain III) on 2 adjacent RuvB subunits; this complex drives branch migration. In the full resolvosome a probable DNA-RuvA(4)-RuvB(12)-RuvC(2) complex forms which resolves the HJ.

Its subcellular location is the cytoplasm. It carries out the reaction ATP + H2O = ADP + phosphate + H(+). The RuvA-RuvB-RuvC complex processes Holliday junction (HJ) DNA during genetic recombination and DNA repair, while the RuvA-RuvB complex plays an important role in the rescue of blocked DNA replication forks via replication fork reversal (RFR). RuvA specifically binds to HJ cruciform DNA, conferring on it an open structure. The RuvB hexamer acts as an ATP-dependent pump, pulling dsDNA into and through the RuvAB complex. RuvB forms 2 homohexamers on either side of HJ DNA bound by 1 or 2 RuvA tetramers; 4 subunits per hexamer contact DNA at a time. Coordinated motions by a converter formed by DNA-disengaged RuvB subunits stimulates ATP hydrolysis and nucleotide exchange. Immobilization of the converter enables RuvB to convert the ATP-contained energy into a lever motion, pulling 2 nucleotides of DNA out of the RuvA tetramer per ATP hydrolyzed, thus driving DNA branch migration. The RuvB motors rotate together with the DNA substrate, which together with the progressing nucleotide cycle form the mechanistic basis for DNA recombination by continuous HJ branch migration. Branch migration allows RuvC to scan DNA until it finds its consensus sequence, where it cleaves and resolves cruciform DNA. This chain is Holliday junction branch migration complex subunit RuvB, found in Paraburkholderia phytofirmans (strain DSM 17436 / LMG 22146 / PsJN) (Burkholderia phytofirmans).